The primary structure comprises 102 residues: UPF0473 protein SAS1551 (102 aa).

This sequence belongs to the UPF0473 family.

The sequence is that of UPF0473 protein SAS1551 from Staphylococcus aureus (strain MSSA476).